Here is a 569-residue protein sequence, read N- to C-terminus: Dihydroxy-acid dehydratase (569 aa).

Aspartate 80 is a Mg(2+) binding site. Cysteine 121 contributes to the [2Fe-2S] cluster binding site. Mg(2+)-binding residues include aspartate 122 and lysine 123. An N6-carboxylysine modification is found at lysine 123. Residue cysteine 194 participates in [2Fe-2S] cluster binding. Glutamate 446 serves as a coordination point for Mg(2+). Serine 472 acts as the Proton acceptor in catalysis.

This sequence belongs to the IlvD/Edd family. In terms of assembly, homodimer. [2Fe-2S] cluster serves as cofactor. It depends on Mg(2+) as a cofactor.

It catalyses the reaction (2R)-2,3-dihydroxy-3-methylbutanoate = 3-methyl-2-oxobutanoate + H2O. The enzyme catalyses (2R,3R)-2,3-dihydroxy-3-methylpentanoate = (S)-3-methyl-2-oxopentanoate + H2O. The protein operates within amino-acid biosynthesis; L-isoleucine biosynthesis; L-isoleucine from 2-oxobutanoate: step 3/4. It participates in amino-acid biosynthesis; L-valine biosynthesis; L-valine from pyruvate: step 3/4. Its function is as follows. Functions in the biosynthesis of branched-chain amino acids. Catalyzes the dehydration of (2R,3R)-2,3-dihydroxy-3-methylpentanoate (2,3-dihydroxy-3-methylvalerate) into 2-oxo-3-methylpentanoate (2-oxo-3-methylvalerate) and of (2R)-2,3-dihydroxy-3-methylbutanoate (2,3-dihydroxyisovalerate) into 2-oxo-3-methylbutanoate (2-oxoisovalerate), the penultimate precursor to L-isoleucine and L-valine, respectively. The chain is Dihydroxy-acid dehydratase from Desulforudis audaxviator (strain MP104C).